Reading from the N-terminus, the 247-residue chain is MSKLFWAMLAFISRLPVPSRWSQGLDFEQYSRGIVMFPFIGLILGGVSGLIFILLQPWCGIPLAALFCILALALLTGGFHLDGLADTCDGIFSARRRERMLEIMRDSRLGTHGGLALIFVLLAKILVVSELALRGTPMLAALAAACAAGRGSAVLLMYRHRYAREEGLGNVFIGKVSGRQTCITLGLAVIVATVLLPGMQGLAAMVVTCAAIFILGQLLKRTLGGQTGDTLGAAIELGELIFLLALL.

The next 5 helical transmembrane spans lie at 34-54 (IVMFPFIGLILGGVSGLIFIL), 59-79 (CGIPLAALFCILALALLTGGF), 113-133 (GGLALIFVLLAKILVVSELAL), 138-158 (MLAALAAACAAGRGSAVLLMY), and 187-207 (LAVIVATVLLPGMQGLAAMVV).

It belongs to the CobS family. Mg(2+) serves as cofactor.

The protein resides in the cell inner membrane. It carries out the reaction alpha-ribazole + adenosylcob(III)inamide-GDP = adenosylcob(III)alamin + GMP + H(+). The catalysed reaction is alpha-ribazole 5'-phosphate + adenosylcob(III)inamide-GDP = adenosylcob(III)alamin 5'-phosphate + GMP + H(+). Its pathway is cofactor biosynthesis; adenosylcobalamin biosynthesis; adenosylcobalamin from cob(II)yrinate a,c-diamide: step 7/7. In terms of biological role, joins adenosylcobinamide-GDP and alpha-ribazole to generate adenosylcobalamin (Ado-cobalamin). Also synthesizes adenosylcobalamin 5'-phosphate from adenosylcobinamide-GDP and alpha-ribazole 5'-phosphate. In Salmonella dublin (strain CT_02021853), this protein is Adenosylcobinamide-GDP ribazoletransferase.